A 772-amino-acid chain; its full sequence is Mitochondrial intermediate peptidase (772 aa).

Residues Met-1–Leu-42 constitute a mitochondrion transit peptide. Residue His-556 participates in Zn(2+) binding. The active site involves Glu-557. The Zn(2+) site is built by His-560 and His-563.

Belongs to the peptidase M3 family. Zn(2+) serves as cofactor.

The protein localises to the mitochondrion matrix. It catalyses the reaction Release of an N-terminal octapeptide as second stage of processing of some proteins imported into the mitochondrion.. In terms of biological role, cleaves proteins, imported into the mitochondrion, to their mature size. While most mitochondrial precursor proteins are processed to the mature form in one step by mitochondrial processing peptidase (MPP), the sequential cleavage by MIP of an octapeptide after initial processing by MPP is a required step for a subgroup of nuclear-encoded precursor proteins destined for the matrix or the inner membrane. This Laccaria bicolor (strain S238N-H82 / ATCC MYA-4686) (Bicoloured deceiver) protein is Mitochondrial intermediate peptidase (OCT1).